The following is a 194-amino-acid chain: Imidazoleglycerol-phosphate dehydratase (194 aa).

It belongs to the imidazoleglycerol-phosphate dehydratase family.

It localises to the cytoplasm. The enzyme catalyses D-erythro-1-(imidazol-4-yl)glycerol 3-phosphate = 3-(imidazol-4-yl)-2-oxopropyl phosphate + H2O. Its pathway is amino-acid biosynthesis; L-histidine biosynthesis; L-histidine from 5-phospho-alpha-D-ribose 1-diphosphate: step 6/9. This is Imidazoleglycerol-phosphate dehydratase from Listeria monocytogenes serovar 1/2a (strain ATCC BAA-679 / EGD-e).